Here is a 264-residue protein sequence, read N- to C-terminus: 3-methyl-2-oxobutanoate hydroxymethyltransferase (264 aa).

Mg(2+) is bound by residues Asp45 and Asp84. 3-methyl-2-oxobutanoate-binding positions include 45–46, Asp84, and Lys112; that span reads DS. Glu114 contacts Mg(2+). Residue Glu181 is the Proton acceptor of the active site.

This sequence belongs to the PanB family. Homodecamer; pentamer of dimers. It depends on Mg(2+) as a cofactor.

It localises to the cytoplasm. The enzyme catalyses 3-methyl-2-oxobutanoate + (6R)-5,10-methylene-5,6,7,8-tetrahydrofolate + H2O = 2-dehydropantoate + (6S)-5,6,7,8-tetrahydrofolate. It participates in cofactor biosynthesis; (R)-pantothenate biosynthesis; (R)-pantoate from 3-methyl-2-oxobutanoate: step 1/2. Functionally, catalyzes the reversible reaction in which hydroxymethyl group from 5,10-methylenetetrahydrofolate is transferred onto alpha-ketoisovalerate to form ketopantoate. The protein is 3-methyl-2-oxobutanoate hydroxymethyltransferase of Shewanella sp. (strain MR-4).